A 141-amino-acid chain; its full sequence is Large ribosomal subunit protein bL17 (141 aa).

Belongs to the bacterial ribosomal protein bL17 family. As to quaternary structure, part of the 50S ribosomal subunit. Contacts protein L32.

This is Large ribosomal subunit protein bL17 from Bartonella bacilliformis (strain ATCC 35685 / KC583 / Herrer 020/F12,63).